Reading from the N-terminus, the 418-residue chain is Probable carboxypeptidase AFLA_000940 (418 aa).

The first 18 residues, Met1–Ala18, serve as a signal peptide directing secretion. N-linked (GlcNAc...) asparagine glycosylation is present at Asn74. Asp147 provides a ligand contact to Zn(2+). N-linked (GlcNAc...) asparagine glycosylation occurs at Asn168. The active-site Proton acceptor is the Glu179. Glu180 contacts Zn(2+).

The protein belongs to the peptidase M20A family. The cofactor is Zn(2+).

It localises to the secreted. The protein is Probable carboxypeptidase AFLA_000940 of Aspergillus flavus (strain ATCC 200026 / FGSC A1120 / IAM 13836 / NRRL 3357 / JCM 12722 / SRRC 167).